Consider the following 532-residue polypeptide: CTP synthase (532 aa).

Positions 1–267 are amidoligase domain; sequence MAKFVFVTGG…HGLVLDQLQI (267 aa). Ser-13 provides a ligand contact to CTP. Ser-13 contacts UTP. 14–19 provides a ligand contact to ATP; the sequence is GLGKGI. Tyr-54 is a binding site for L-glutamine. ATP is bound at residue Asp-71. Mg(2+) contacts are provided by Asp-71 and Glu-141. CTP contacts are provided by residues 148–150, 188–193, and Lys-224; these read DIE and KTKPIQ. UTP is bound by residues 188 to 193 and Lys-224; that span reads KTKPIQ. Residues 292–532 enclose the Glutamine amidotransferase type-1 domain; the sequence is EVTFVGKYIE…GFVEAIVNNK (241 aa). Residue Gly-354 participates in L-glutamine binding. Cys-381 functions as the Nucleophile; for glutamine hydrolysis in the catalytic mechanism. L-glutamine is bound by residues 382 to 385, Glu-405, and Arg-462; that span reads LGMQ. Catalysis depends on residues His-507 and Glu-509.

Belongs to the CTP synthase family. As to quaternary structure, homotetramer.

The catalysed reaction is UTP + L-glutamine + ATP + H2O = CTP + L-glutamate + ADP + phosphate + 2 H(+). It catalyses the reaction L-glutamine + H2O = L-glutamate + NH4(+). The enzyme catalyses UTP + NH4(+) + ATP = CTP + ADP + phosphate + 2 H(+). It functions in the pathway pyrimidine metabolism; CTP biosynthesis via de novo pathway; CTP from UDP: step 2/2. Allosterically activated by GTP, when glutamine is the substrate; GTP has no effect on the reaction when ammonia is the substrate. The allosteric effector GTP functions by stabilizing the protein conformation that binds the tetrahedral intermediate(s) formed during glutamine hydrolysis. Inhibited by the product CTP, via allosteric rather than competitive inhibition. Its function is as follows. Catalyzes the ATP-dependent amination of UTP to CTP with either L-glutamine or ammonia as the source of nitrogen. Regulates intracellular CTP levels through interactions with the four ribonucleotide triphosphates. The sequence is that of CTP synthase from Mesoplasma florum (strain ATCC 33453 / NBRC 100688 / NCTC 11704 / L1) (Acholeplasma florum).